Consider the following 753-residue polypeptide: 5-methyltetrahydropteroyltriglutamate--homocysteine methyltransferase (753 aa).

5-methyltetrahydropteroyltri-L-glutamate is bound by residues 17-20 (RELK) and lysine 117. L-homocysteine-binding positions include 431–433 (IGS) and glutamate 484. L-methionine is bound by residues 431–433 (IGS) and glutamate 484. 5-methyltetrahydropteroyltri-L-glutamate contacts are provided by residues 515 to 516 (RC) and tryptophan 561. Aspartate 599 contacts L-homocysteine. An L-methionine-binding site is contributed by aspartate 599. Glutamate 605 contacts 5-methyltetrahydropteroyltri-L-glutamate. 3 residues coordinate Zn(2+): histidine 641, cysteine 643, and glutamate 665. Catalysis depends on histidine 694, which acts as the Proton donor. A Zn(2+)-binding site is contributed by cysteine 726.

Belongs to the vitamin-B12 independent methionine synthase family. The cofactor is Zn(2+).

The enzyme catalyses 5-methyltetrahydropteroyltri-L-glutamate + L-homocysteine = tetrahydropteroyltri-L-glutamate + L-methionine. It participates in amino-acid biosynthesis; L-methionine biosynthesis via de novo pathway; L-methionine from L-homocysteine (MetE route): step 1/1. Catalyzes the transfer of a methyl group from 5-methyltetrahydrofolate to homocysteine resulting in methionine formation. This chain is 5-methyltetrahydropteroyltriglutamate--homocysteine methyltransferase, found in Escherichia fergusonii (strain ATCC 35469 / DSM 13698 / CCUG 18766 / IAM 14443 / JCM 21226 / LMG 7866 / NBRC 102419 / NCTC 12128 / CDC 0568-73).